A 309-amino-acid polypeptide reads, in one-letter code: Elongation factor Ts (309 aa).

The interval 82-85 (TDFV) is involved in Mg(2+) ion dislocation from EF-Tu.

It belongs to the EF-Ts family.

It localises to the cytoplasm. Functionally, associates with the EF-Tu.GDP complex and induces the exchange of GDP to GTP. It remains bound to the aminoacyl-tRNA.EF-Tu.GTP complex up to the GTP hydrolysis stage on the ribosome. The sequence is that of Elongation factor Ts from Rickettsia peacockii (strain Rustic).